Reading from the N-terminus, the 513-residue chain is MLLAELAEVSRAVAATPARLEKIARLAEALRRLAPDERAVGASWLAGDLPGGRIGIGGATVRAALDAAPAEGGGPGLTVAEVDAALGRIATASGAGSAGARRRELDALLARAGAPERWFLAALLLGELRQGALEGVLADAVARAAGLPAAEVRRAAMLAGALPPVAVAALSEGAAGLARFRLRVGEPVSPMLAQTAADVEEALRALGGEAALEWKLDGARIQAHRDGGEVRVFSRSLRDVTAAVPEVVALLRAAPEPRLVLDGEAIALRADGTPEPFQVTMRRFGRRLDVERLAPDLPLTAFFFDALVAGGAELLASPERVRWAALERAVPAEQRVPRLVTRDPAEAGAFLEDALARGQEGVVAKALDAPYEAGRRGAAWLKVKRAHTLDLVVLAAEWGSGRRRGWLSNLHLGARDPSTGGFVMLGKTFKGMTDAMLAWQTERLKALATGPLDAWQVPVRPELVVEVAFDGIQSSPRYPGGLALRFARVKRYREDKRPEDADTIETVRGLYGG.

Glutamate 213 contributes to the ATP binding site. Catalysis depends on lysine 215, which acts as the N6-AMP-lysine intermediate. Positions 220, 235, 264, 304, 376, and 382 each coordinate ATP.

The protein belongs to the ATP-dependent DNA ligase family. Mg(2+) is required as a cofactor.

The catalysed reaction is ATP + (deoxyribonucleotide)n-3'-hydroxyl + 5'-phospho-(deoxyribonucleotide)m = (deoxyribonucleotide)n+m + AMP + diphosphate.. In terms of biological role, DNA ligase that seals nicks in double-stranded DNA during DNA replication, DNA recombination and DNA repair. This chain is Probable DNA ligase, found in Anaeromyxobacter dehalogenans (strain 2CP-1 / ATCC BAA-258).